A 578-amino-acid chain; its full sequence is MLTETRPRDVQVAEIAPGVLVLRSRTWDRLKFEVEYGRQQGTTSNSYLIQAPQPALLDPPGESFTQIYLQELQRHIDLNQLRYLILSHVNSNRLATVKVLLEKAPQITLVCSKAGAVTLRSAIGEQLHLWIARADTPLELGGDRQLMFIAAATPRWPDGLITVDPQNQIVFSDKLFGAHVCGDSLYDEQWKKLDEDRAYYFECLHAAQTRQVESILDRLAELTPPPRLYAPAHGPIVKFSRSRLFQDYRDWCQAQAEQETKVALFYASAYGNTAILANAIAQGLTAAGVQVEAVNCETTPPAEMQALIHSSDGFIIGSPTLGGHMPTQVQTALGFILAEGSQTKLAGVFGSYGWSGEAIDDIEQKLLDAGYTLGFETLRVKFTPTATDLEKCQIAANEFAQALKKLRKSRTVRPSSLAEAQVDRTEQAVNRVVGSLCVLTTLPEGCFHLTQAAAILVSSVSQASFNPPGITVSLPQEWAESLCLVGDRFVLNILKEGSPLVRQFQQAQRLGEQQLATLGLKSAESGAPILLDALAYLECTVESRMNCGNHWLIYAVVESGELLQTSGLTAIQHRKTSS.

Residues Gln-39–His-233 are zinc metallo-hydrolase. The 143-residue stretch at Val-262–Lys-404 folds into the Flavodoxin-like domain. Residues Val-429–Ser-578 form a flavodoxin-reductase-like region.

It in the N-terminal section; belongs to the zinc metallo-hydrolase group 3 family. In the C-terminal section; belongs to the flavodoxin reductase family. Requires Fe cation as cofactor.

Its function is as follows. Mediates electron transfer from NADH to oxygen, reducing it to water. This modular protein has 3 redox cofactors, in other organisms the same activity requires 2 or 3 proteins. The sequence is that of Putative diflavin flavoprotein A 2 (dfa2) from Thermosynechococcus vestitus (strain NIES-2133 / IAM M-273 / BP-1).